The following is a 352-amino-acid chain: Histidine biosynthesis bifunctional protein HisB (352 aa).

The tract at residues 1 to 163 (MKKILFIDRD…MVASAIINDA (163 aa)) is histidinol-phosphatase. Asp8 (nucleophile) is an active-site residue. Asp8 and Asp10 together coordinate Mg(2+). The active-site Proton donor is Asp10. Residues Cys91, His93, Cys99, and Cys101 each contribute to the Zn(2+) site. Residue Asp128 participates in Mg(2+) binding. The segment at 164 to 352 (RKASVQRKTK…NYLPSTKGVL (189 aa)) is imidazoleglycerol-phosphate dehydratase.

In the N-terminal section; belongs to the histidinol-phosphatase family. This sequence in the C-terminal section; belongs to the imidazoleglycerol-phosphate dehydratase family. It depends on Mg(2+) as a cofactor. Zn(2+) is required as a cofactor.

The protein localises to the cytoplasm. It catalyses the reaction D-erythro-1-(imidazol-4-yl)glycerol 3-phosphate = 3-(imidazol-4-yl)-2-oxopropyl phosphate + H2O. The enzyme catalyses L-histidinol phosphate + H2O = L-histidinol + phosphate. It participates in amino-acid biosynthesis; L-histidine biosynthesis; L-histidine from 5-phospho-alpha-D-ribose 1-diphosphate: step 6/9. It functions in the pathway amino-acid biosynthesis; L-histidine biosynthesis; L-histidine from 5-phospho-alpha-D-ribose 1-diphosphate: step 8/9. The protein is Histidine biosynthesis bifunctional protein HisB of Legionella pneumophila (strain Lens).